The chain runs to 264 residues: Thymidylate synthase (264 aa).

Residue Arg21 participates in dUMP binding. Position 51 (His51) interacts with (6R)-5,10-methylene-5,6,7,8-tetrahydrofolate. Residue 126 to 127 (RR) coordinates dUMP. Cys146 functions as the Nucleophile in the catalytic mechanism. Residues 166–169 (RSCD), Asn177, and 207–209 (HLY) each bind dUMP. Asp169 is a (6R)-5,10-methylene-5,6,7,8-tetrahydrofolate binding site. Ala263 provides a ligand contact to (6R)-5,10-methylene-5,6,7,8-tetrahydrofolate.

Belongs to the thymidylate synthase family. Bacterial-type ThyA subfamily. As to quaternary structure, homodimer.

Its subcellular location is the cytoplasm. The catalysed reaction is dUMP + (6R)-5,10-methylene-5,6,7,8-tetrahydrofolate = 7,8-dihydrofolate + dTMP. Its pathway is pyrimidine metabolism; dTTP biosynthesis. Its function is as follows. Catalyzes the reductive methylation of 2'-deoxyuridine-5'-monophosphate (dUMP) to 2'-deoxythymidine-5'-monophosphate (dTMP) while utilizing 5,10-methylenetetrahydrofolate (mTHF) as the methyl donor and reductant in the reaction, yielding dihydrofolate (DHF) as a by-product. This enzymatic reaction provides an intracellular de novo source of dTMP, an essential precursor for DNA biosynthesis. The protein is Thymidylate synthase of Salmonella paratyphi C (strain RKS4594).